The following is a 283-amino-acid chain: D-alanine aminotransferase (283 aa).

A substrate-binding site is contributed by Tyr32. Arg51 provides a ligand contact to pyridoxal 5'-phosphate. Substrate-binding residues include Arg99 and His101. Residue Lys146 is the Proton acceptor of the active site. Lys146 carries the N6-(pyridoxal phosphate)lysine modification. Glu178 provides a ligand contact to pyridoxal 5'-phosphate.

Belongs to the class-IV pyridoxal-phosphate-dependent aminotransferase family. As to quaternary structure, homodimer. Requires pyridoxal 5'-phosphate as cofactor.

The catalysed reaction is D-alanine + 2-oxoglutarate = D-glutamate + pyruvate. In terms of biological role, acts on the D-isomers of alanine, leucine, aspartate, glutamate, aminobutyrate, norvaline and asparagine. The enzyme transfers an amino group from a substrate D-amino acid to the pyridoxal phosphate cofactor to form pyridoxamine and an alpha-keto acid in the first half-reaction. The second-half reaction is the reverse of the first, transferring the amino group from the pyridoxamine to a second alpha-keto acid to form the product D-amino acid via a ping-pong mechanism. This is an important process in the formation of D-alanine and D-glutamate, which are essential bacterial cell wall components. In Bacillus sp. (strain YM-1), this protein is D-alanine aminotransferase (dat).